Reading from the N-terminus, the 248-residue chain is Cyclo(L-leucyl-L-leucyl) synthase (248 aa).

Catalysis depends on Ser37, which acts as the Nucleophile. Substrate-binding positions include Asn40, 180-184 (YVIAE), Tyr204, and 209-210 (KL).

This sequence belongs to the CDPS family. As to quaternary structure, monomer.

The enzyme catalyses 2 L-leucyl-tRNA(Leu) = cyclo(L-leucyl-L-leucyl) + 2 tRNA(Leu) + 2 H(+). Involved in the biosynthesis of pulcherrimin, a red extracellular pigment. It uses activated amino acids in the form of aminoacyl-tRNAs (aa-tRNAs) as substrates to catalyze the ATP-independent formation of cyclodipeptides which are intermediates in diketopiperazine (DKP) biosynthetic pathways. Catalyzes the formation of cyclo(L-Leu-L-Leu) (cLL) from L-leucyl-tRNA(Leu). Can also incorporate various nonpolar residues, such as L-phenylalanine, L-leucine and methionine, into cyclodipeptides. This chain is Cyclo(L-leucyl-L-leucyl) synthase (yvmC), found in Bacillus subtilis (strain 168).